A 468-amino-acid polypeptide reads, in one-letter code: Ribosomal protein uS12 methylthiotransferase RimO (468 aa).

The MTTase N-terminal domain maps to 18-129 (PTVAFAHLGC…IVEVLERVEA (112 aa)). [4Fe-4S] cluster-binding residues include cysteine 27, cysteine 63, cysteine 92, cysteine 167, cysteine 171, and cysteine 174. The Radical SAM core domain maps to 153–382 (TTGEAVAYLK…MTLQQPISAA (230 aa)). The region spanning 385–456 (ARWVGRTVDA…IYDLRAEIVG (72 aa)) is the TRAM domain.

Belongs to the methylthiotransferase family. RimO subfamily. [4Fe-4S] cluster is required as a cofactor.

The protein resides in the cytoplasm. It catalyses the reaction L-aspartate(89)-[ribosomal protein uS12]-hydrogen + (sulfur carrier)-SH + AH2 + 2 S-adenosyl-L-methionine = 3-methylsulfanyl-L-aspartate(89)-[ribosomal protein uS12]-hydrogen + (sulfur carrier)-H + 5'-deoxyadenosine + L-methionine + A + S-adenosyl-L-homocysteine + 2 H(+). Its function is as follows. Catalyzes the methylthiolation of an aspartic acid residue of ribosomal protein uS12. This chain is Ribosomal protein uS12 methylthiotransferase RimO, found in Synechococcus sp. (strain WH7803).